The chain runs to 202 residues: Small ribosomal subunit protein uS5 (202 aa).

Gly residues predominate over residues 1–13 (MPGQQRRGGGSGG). Residues 1–31 (MPGQQRRGGGSGGSDRRERRDRSGGGPAQEK) form a disordered region. Basic and acidic residues predominate over residues 14–23 (SDRRERRDRS). Residues 34–97 (YVERVVAINR…EEAKKHFFKV (64 aa)) form the S5 DRBM domain.

This sequence belongs to the universal ribosomal protein uS5 family. As to quaternary structure, part of the 30S ribosomal subunit. Contacts proteins S4 and S8.

In terms of biological role, with S4 and S12 plays an important role in translational accuracy. Located at the back of the 30S subunit body where it stabilizes the conformation of the head with respect to the body. The polypeptide is Small ribosomal subunit protein uS5 (Frankia alni (strain DSM 45986 / CECT 9034 / ACN14a)).